A 447-amino-acid polypeptide reads, in one-letter code: UDP-N-acetylmuramoylalanine--D-glutamate ligase (447 aa).

112–118 (GTNGKST) is an ATP binding site.

The protein belongs to the MurCDEF family.

It is found in the cytoplasm. It carries out the reaction UDP-N-acetyl-alpha-D-muramoyl-L-alanine + D-glutamate + ATP = UDP-N-acetyl-alpha-D-muramoyl-L-alanyl-D-glutamate + ADP + phosphate + H(+). It functions in the pathway cell wall biogenesis; peptidoglycan biosynthesis. Cell wall formation. Catalyzes the addition of glutamate to the nucleotide precursor UDP-N-acetylmuramoyl-L-alanine (UMA). In Legionella pneumophila (strain Paris), this protein is UDP-N-acetylmuramoylalanine--D-glutamate ligase.